We begin with the raw amino-acid sequence, 187 residues long: MMDGVEGGTAMYGGLETVQYVRTHHQHLCRENQCTSALVKHIKAPLHLVWSLVRRFDQPQKYKPFVSRCTVIGDPEIGSLREVNVKSGLPATTSTERLELLDDEEHILGIKIIGGDHRLKNYSSILTVHPEIIEGRAGTMVIESFVVDVPQGNTKDETCYFVEALIRCNLKSLADVSERLASQDITQ.

An START-like region spans residues 27 to 178; it reads HLCRENQCTS…NLKSLADVSE (152 aa). Disulfide bonds link cysteine 29–cysteine 159 and cysteine 34–cysteine 159. Abscisate contacts are provided by residues lysine 63, 91 to 96, 118 to 124, and glutamate 143; these read ATTSTE and RLKNYSS. The short motif at 87 to 91 is the Gate loop element; sequence SGLPA. Residues 117-119 carry the Latch loop motif; it reads HRL.

Belongs to the PYR/PYL/RCAR abscisic acid intracellular receptor family. In terms of assembly, homodimer. Monomer. Binds ABA on one subunit only. Binds to CARs protein in an ABA-independent manner, both at the plasma membrane and in the nucleus. Binds specifically (+)-ABA but not (-)-ABA. Interacts with HAB1, ABI1 and ABI2, and possibly with other PP2Cs. Interacts with TOPP1. Interacts with DDA1. Expressed in root tips, vascular tissues, stomata, flowers, pollen tubes and developing seeds.

The protein resides in the cytoplasm. It is found in the nucleus. The protein localises to the cell membrane. Functionally, receptor for abscisic acid (ABA) required for ABA-mediated responses such as stomatal closure and germination inhibition. Inhibits the activity of group-A protein phosphatases type 2C (PP2Cs) in an ABA-independent manner but more efficiently when activated by ABA. Confers enhanced sensitivity to ABA. Can be activated only by (+)-ABA but not by (-)-ABA. In Arabidopsis thaliana (Mouse-ear cress), this protein is Abscisic acid receptor PYL9 (PYL9).